We begin with the raw amino-acid sequence, 641 residues long: MSASANLANVYAELMRRCGESYTITYGAPPTYLVSMVGAAEAGKKIVLVFKEDRNGAVARLRTTPTRAAPKKEGSADLDLTGSPLKDDCLVDAIADLSIDLQLDHSNPWKLEEEYQRGIPVDKARSIVCSEFLQLAEGLGSVWFLCDGSDLGQTQLLQYEFNPTHFSRGILSYQGVRPAYLVTSQALVRHHGKTPDETLIENSYQVNPHMRLRCSWTSSAALPLLVNLNDCDVALNHTFRVGDCGPLTQDFMNQLRILVYIREDIVSYHTDVKQGVSRDPTYRCGSGIDMDELRESINQTMTDVSGLIGRYSISNAEFDIEDVVQRAKVRQLTDLTDKLWELLKCCHSYKDLKIAFSMLFQCAARCNIVNTPTNKNRLAKIITELANRRLAMPCLSGAEPLELLLEIGLEKLYKDYEFIYTESKMCSTNLLKDDSSGASMDDGSPQNLPQLRKSLHNAVRGDPTPGAGMRKTLLHHHGAVNSRSTKYAGSDDDAGFKNSHFDEHESTERISKLFQIHCTLEHLLMMHIHLNLANVYNDVCSELLKKPPKLVESIDDQLSDVMDIRLSAHYVRDHLDGKDPYSRHITMRSHNKFRELKTTFYFNSENICPPNLAQCFQCDDKEMVKERTYHSWIYHKIRSLK.

At Ser312 the chain carries Phosphoserine.

This sequence belongs to the ZWILCH family. As to quaternary structure, component of the RZZ complex composed of rod, Zw10 and Zwilch.

It localises to the cytoplasm. The protein localises to the chromosome. Its subcellular location is the centromere. The protein resides in the kinetochore. It is found in the cytoskeleton. It localises to the spindle. Its function is as follows. Essential component of the mitotic checkpoint, which prevents cells from prematurely exiting mitosis. Required for the assembly of the dynein-dynactin, Mad2 complexes and spindly/CG15415 onto kinetochores. Its function related to the spindle assembly machinery is proposed to depend on its association in the RZZ complex. Failure to assemble the complex due to the absence of any one of its components, results in the incorrect redistribution of the remaining components to diverse membrane compartments. This chain is Protein zwilch, found in Drosophila melanogaster (Fruit fly).